The primary structure comprises 86 residues: Small ribosomal subunit protein bS20 (86 aa).

The tract at residues 1–25 (MTNIKSQQKRNRTNERARLRNKSVK) is disordered.

It belongs to the bacterial ribosomal protein bS20 family.

Its function is as follows. Binds directly to 16S ribosomal RNA. This Mycobacterium leprae (strain Br4923) protein is Small ribosomal subunit protein bS20.